Here is a 145-residue protein sequence, read N- to C-terminus: Deoxyuridine 5'-triphosphate nucleotidohydrolase (145 aa).

Residues R62 to G64, N75, T79 to D81, and K89 contribute to the substrate site.

Belongs to the dUTPase family. It depends on Mg(2+) as a cofactor.

It catalyses the reaction dUTP + H2O = dUMP + diphosphate + H(+). It participates in pyrimidine metabolism; dUMP biosynthesis; dUMP from dCTP (dUTP route): step 2/2. Its function is as follows. This enzyme is involved in nucleotide metabolism: it produces dUMP, the immediate precursor of thymidine nucleotides and it decreases the intracellular concentration of dUTP so that uracil cannot be incorporated into DNA. This Helicobacter pylori (strain P12) protein is Deoxyuridine 5'-triphosphate nucleotidohydrolase.